We begin with the raw amino-acid sequence, 265 residues long: Tryptophan 2,3-dioxygenase (265 aa).

Residues 38-42 (FIVVH) and arginine 104 each bind substrate. Residue histidine 223 participates in heme binding. Threonine 237 lines the substrate pocket.

This sequence belongs to the tryptophan 2,3-dioxygenase family. Homotetramer. Heme is required as a cofactor.

It catalyses the reaction L-tryptophan + O2 = N-formyl-L-kynurenine. Its pathway is amino-acid degradation; L-tryptophan degradation via kynurenine pathway; L-kynurenine from L-tryptophan: step 1/2. In terms of biological role, heme-dependent dioxygenase that catalyzes the oxidative cleavage of the L-tryptophan (L-Trp) pyrrole ring and converts L-tryptophan to N-formyl-L-kynurenine. Catalyzes the oxidative cleavage of the indole moiety. The protein is Tryptophan 2,3-dioxygenase of Anaeromyxobacter dehalogenans (strain 2CP-C).